Reading from the N-terminus, the 603-residue chain is Prostaglandin G/H synthase 1 (603 aa).

The N-terminal stretch at Met-1 to Pro-27 is a signal peptide. Positions Pro-35–Thr-73 constitute an EGF-like domain. 4 disulfide bridges follow: Cys-39/Cys-50, Cys-40/Cys-162, Cys-44/Cys-60, and Cys-62/Cys-72. Residues Asn-71, Asn-107, and Asn-147 are each glycosylated (N-linked (GlcNAc...) asparagine). The active-site Proton acceptor is His-210. Catalysis depends on Tyr-388, which acts as the For cyclooxygenase activity. His-391 is a binding site for heme b. A disulfide bridge links Cys-572 with Cys-578.

The protein belongs to the prostaglandin G/H synthase family. Homodimer. It depends on heme b as a cofactor. Post-translationally, N-glycosylated. N-linked glycosylation is necessary for enzymatic activity. Brain cortex. Isoform 2 is expressed in the cerebral cortex and heart.

The protein localises to the microsome membrane. It is found in the endoplasmic reticulum membrane. It catalyses the reaction (5Z,8Z,11Z,14Z)-eicosatetraenoate + AH2 + 2 O2 = prostaglandin H2 + A + H2O. The enzyme catalyses (5Z,8Z,11Z,14Z)-eicosatetraenoate + 2 O2 = prostaglandin G2. The catalysed reaction is prostaglandin G2 + AH2 = prostaglandin H2 + A + H2O. It carries out the reaction (9Z,12Z)-octadecadienoate + AH2 + O2 = (9R)-hydroxy-(10E,12Z)-octadecadienoate + A + H2O. It catalyses the reaction (9Z,12Z)-octadecadienoate + AH2 + O2 = (9S)-hydroxy-(10E,12Z)-octadecadienoate + A + H2O. The enzyme catalyses (9Z,12Z)-octadecadienoate + AH2 + O2 = (13S)-hydroxy-(9Z,11E)-octadecadienoate + A + H2O. The catalysed reaction is (9Z,12Z)-octadecadienoate + AH2 + O2 = (13R)-hydroxy-(9Z,11E)-octadecadienoate + A + H2O. It participates in lipid metabolism; prostaglandin biosynthesis. With respect to regulation, the cyclooxygenase activity is inhibited by nonsteroidal anti-inflammatory drugs (NSAIDs) including ibuprofen, flurbiprofen, ketoprofen, naproxen, flurbiprofen, anirolac, fenclofenac and diclofenac. Its function is as follows. Dual cyclooxygenase and peroxidase that plays an important role in the biosynthesis pathway of prostanoids, a class of C20 oxylipins mainly derived from arachidonate ((5Z,8Z,11Z,14Z)-eicosatetraenoate, AA, C20:4(n-6)), with a particular role in the inflammatory response. The cyclooxygenase activity oxygenates AA to the hydroperoxy endoperoxide prostaglandin G2 (PGG2), and the peroxidase activity reduces PGG2 to the hydroxy endoperoxide prostaglandin H2 (PGH2), the precursor of all 2-series prostaglandins and thromboxanes. This complex transformation is initiated by abstraction of hydrogen at carbon 13 (with S-stereochemistry), followed by insertion of molecular O2 to form the endoperoxide bridge between carbon 9 and 11 that defines prostaglandins. The insertion of a second molecule of O2 (bis-oxygenase activity) yields a hydroperoxy group in PGG2 that is then reduced to PGH2 by two electrons. Involved in the constitutive production of prostanoids in particular in the stomach and platelets. In gastric epithelial cells, it is a key step in the generation of prostaglandins, such as prostaglandin E2 (PGE2), which plays an important role in cytoprotection. In platelets, it is involved in the generation of thromboxane A2 (TXA2), which promotes platelet activation and aggregation, vasoconstriction and proliferation of vascular smooth muscle cells. Can also use linoleate (LA, (9Z,12Z)-octadecadienoate, C18:2(n-6)) as substrate and produce hydroxyoctadecadienoates (HODEs) in a regio- and stereospecific manner, being (9R)-HODE ((9R)-hydroxy-(10E,12Z)-octadecadienoate) and (13S)-HODE ((13S)-hydroxy-(9Z,11E)-octadecadienoate) its major products. This Canis lupus familiaris (Dog) protein is Prostaglandin G/H synthase 1 (PTGS1).